Reading from the N-terminus, the 278-residue chain is 4-deoxy-L-threo-5-hexosulose-uronate ketol-isomerase (278 aa).

Residues histidine 196, histidine 198, glutamate 203, and histidine 245 each coordinate Zn(2+).

Belongs to the KduI family. Zn(2+) serves as cofactor.

It carries out the reaction 5-dehydro-4-deoxy-D-glucuronate = 3-deoxy-D-glycero-2,5-hexodiulosonate. The protein operates within glycan metabolism; pectin degradation; 2-dehydro-3-deoxy-D-gluconate from pectin: step 4/5. Catalyzes the isomerization of 5-dehydro-4-deoxy-D-glucuronate to 3-deoxy-D-glycero-2,5-hexodiulosonate. The sequence is that of 4-deoxy-L-threo-5-hexosulose-uronate ketol-isomerase from Salmonella heidelberg (strain SL476).